Here is a 1453-residue protein sequence, read N- to C-terminus: Collagen alpha-1(I) chain (1453 aa).

The N-terminal stretch at 1–22 is a signal peptide; it reads MFSFVDSRLLLLIAATVLLTRG. Residues 23-151 constitute a propeptide, N-terminal propeptide; sequence EGEEDIQTGS…PPGLGGNFAP (129 aa). The VWFC domain occupies 31–89; the sequence is GSCVQDGLTYNDKDVWKPEPCQICVCDSGNILCDEVICEDTSDCPNAEIPFGECCPICP. A disordered region spans residues 98–1203; that stretch reads PESAGVEGPK…PQEKAHDGGR (1106 aa). The segment covering 106–116 has biased composition (basic and acidic residues); the sequence is PKGDTGPRGDR. Over residues 131–143 the composition is skewed to pro residues; the sequence is PGLPGPPGPPGPP. A Pyrrolidone carboxylic acid modification is found at glutamine 152. Lysine 160 carries the allysine modification. Residues 162-176 are compositionally biased toward low complexity; it reads AGVAVPGPMGPAGPR. 4-hydroxyproline occurs at positions 179, 182, 185, 194, 197, 200, 215, 230, 236, 245, and 251. The segment covering 187 to 206 has biased composition (low complexity); that stretch reads PQGFQGPPGEPGEPGASGPM. 5-hydroxylysine; alternate is present on lysine 254. A glycan (O-linked (Gal...) hydroxylysine; partial) is linked at lysine 254. Residues 265 to 284 show a composition bias toward low complexity; the sequence is AKGQPGPAGPKGEPGSPGEN. 4-hydroxyproline is present on residues proline 269, proline 278, proline 281, proline 287, proline 296, proline 302, proline 317, proline 323, proline 332, and proline 335. Positions 307–319 are enriched in low complexity; the sequence is PAGARGNDGAPGA. A compositionally biased stretch (pro residues) spans 320–334; sequence AGPPGPTGPAGPPGF. A compositionally biased stretch (low complexity) spans 350 to 361; the sequence is RGSEGPQGSRGE. 8 positions are modified to 4-hydroxyproline: proline 362, proline 365, proline 377, proline 383, proline 392, proline 398, proline 401, and proline 416. Over residues 368 to 418 the composition is skewed to low complexity; it reads AGAAGPAGNPGADGQPGAKGATGAPGIAGAPGFPGARGPSGPQGPSGAPGP. At lysine 419 the chain carries 5-hydroxylysine. 4-hydroxyproline occurs at positions 425, 428, 440, 449, 464, 470, 479, and 485. The segment covering 463–482 has biased composition (low complexity); sequence EPGPAGLPGPAGERGAPGSR. Lysine 494 bears the 5-hydroxylysine mark. Residues proline 497, proline 503, proline 512, proline 518, proline 524, proline 533, proline 536, proline 545, proline 554, proline 560, proline 572, proline 581, proline 584, proline 590, proline 593, proline 611, proline 629, proline 635, proline 641, proline 647, proline 653, proline 659, proline 671, proline 680, proline 692, proline 704, proline 707, proline 713, proline 719, proline 728, and proline 737 each carry the 4-hydroxyproline modification. Positions 527–581 are enriched in low complexity; the sequence is KGLTGSPGSPGPDGKTGPPGPAGQDGRPGPAGPPGARGQAGVMGFPGPKGAAGEP. The span at 623-664 shows a compositional bias: low complexity; sequence QGPAGAPGFQGLPGPAGPPGEAGKPGEQGVPGNAGAPGPAGA. Residues 685–722 show a composition bias toward low complexity; the sequence is PRGANGAPGNDGAKGDAGAPGAPGNEGPPGLEGMPGER. The residue at position 740 (lysine 740) is a 5-hydroxylysine. 12 positions are modified to 4-hydroxyproline: proline 746, proline 761, proline 767, proline 776, proline 788, proline 794, proline 797, proline 806, proline 812, proline 830, proline 839, and proline 848. The segment covering 800-827 has biased composition (low complexity); the sequence is AGFAGPPGADGQPGAKGETGDAGAKGDA. The span at 835-883 shows a compositional bias: low complexity; the sequence is PTGAPGPAGZVGAPGPKGARGSAGPPGATGFPGAAGRVGPPGPSGNIGL. Lysine 851 is modified (5-hydroxylysine). 2 positions are modified to 4-hydroxyproline: proline 860 and proline 866. Proline 874 bears the 3-hydroxyproline mark. Proline 875, proline 884, proline 887, proline 908, proline 911, proline 917, proline 920, proline 926, proline 935, proline 953, proline 962, proline 965, proline 971, proline 986, proline 992, proline 998, proline 1007, and proline 1013 each carry 4-hydroxyproline. Over residues 890-908 the composition is skewed to low complexity; the sequence is AGKZGSKGPRGETGPAGRP. The span at 910-920 shows a compositional bias: pro residues; that stretch reads EPGPAGPPGPP. Over residues 985 to 995 the composition is skewed to pro residues; sequence PPGPMGPPGLA. Over residues 997–1021 the composition is skewed to low complexity; the sequence is PPGEAGREGAPGAEGAPGRDGAAGP. The residue at position 1022 (lysine 1022) is a 5-hydroxylysine; partial. The segment covering 1031-1046 has biased composition (pro residues); that stretch reads AGPPGAPGAPGAPGPV. 4 positions are modified to 4-hydroxyproline: proline 1034, proline 1037, proline 1040, and proline 1067. A compositionally biased stretch (low complexity) spans 1070–1081; sequence AGARGPAGPQGP. Residues 1082-1096 are compositionally biased toward basic and acidic residues; the sequence is RGDKGETGEQGDRGM. Lysine 1085 is subject to 5-hydroxylysine; partial. Lysine 1097 bears the 5-hydroxylysine; alternate mark. The O-linked (Gal...) hydroxylysine; partial glycan is linked to lysine 1097. A 4-hydroxyproline mark is found at proline 1109, proline 1112, proline 1115, proline 1133, and proline 1148. Residues 1115 to 1139 show a composition bias toward low complexity; it reads PGEQGPSGASGPAGPRGPPGSAGAA. At proline 1153 the chain carries 3-hydroxyproline. Position 1154 is a 4-hydroxyproline (proline 1154). The span at 1166–1181 shows a compositional bias: pro residues; sequence VGPPGPPGPPGPPGPP. Proline 1168 carries the 3-hydroxyproline modification. Proline 1169 is subject to 4-hydroxyproline. A 3-hydroxyproline modification is found at proline 1171. Residue proline 1172 is modified to 4-hydroxyproline. Proline 1174 carries the 3-hydroxyproline modification. Residues proline 1175, proline 1178, and proline 1181 each carry the 4-hydroxyproline modification. Position 1197 is an allysine (lysine 1197). Positions 1208–1453 are cleaved as a propeptide — C-terminal propeptide; it reads DDANVMRDRD…GIDIGPVCFL (246 aa). Positions 1218-1453 constitute a Fibrillar collagen NC1 domain; that stretch reads LEVDTTLKSL…GIDIGPVCFL (236 aa). 3 disulfide bridges follow: cysteine 1248–cysteine 1280, cysteine 1288–cysteine 1451, and cysteine 1359–cysteine 1404. Positions 1266, 1268, 1269, 1271, and 1274 each coordinate Ca(2+). A glycan (N-linked (GlcNAc...) asparagine) is linked at asparagine 1354.

The protein belongs to the fibrillar collagen family. As to quaternary structure, trimers of one alpha 2(I) and two alpha 1(I) chains. Contains mostly 4-hydroxyproline. Proline residues at the third position of the tripeptide repeating unit (G-X-Y) are 4-hydroxylated in some or all of the chains. In terms of processing, contains 3-hydroxyproline. This modification occurs on the first proline residue in the sequence motif Gly-Pro-Hyp, where Hyp is 4-hydroxyproline. Post-translationally, lysine residues at the third position of the tripeptide repeating unit (G-X-Y) are 5-hydroxylated in some or all of the chains. O-glycosylated on hydroxylated lysine residues. The O-linked glycan consists of a Glc-Gal disaccharide. In terms of tissue distribution, forms the fibrils of tendon, ligaments and bones. In bones the fibrils are mineralized with calcium hydroxyapatite.

It is found in the secreted. Its subcellular location is the extracellular space. It localises to the extracellular matrix. Type I collagen is a member of group I collagen (fibrillar forming collagen). This is Collagen alpha-1(I) chain (COL1A1) from Gallus gallus (Chicken).